The following is a 640-amino-acid chain: uncharacterized protein (640 aa).

A disordered region spans residues glutamine 594–glutamate 614.

This is an uncharacterized protein from Rattus norvegicus (Rat).